We begin with the raw amino-acid sequence, 142 residues long: Galactose-6-phosphate isomerase subunit LacA 2 (142 aa).

Belongs to the LacAB/RpiB family. Heteromultimeric protein consisting of LacA and LacB.

It carries out the reaction aldehydo-D-galactose 6-phosphate = keto-D-tagatose 6-phosphate. It participates in carbohydrate metabolism; D-galactose 6-phosphate degradation; D-tagatose 6-phosphate from D-galactose 6-phosphate: step 1/1. The polypeptide is Galactose-6-phosphate isomerase subunit LacA 2 (Streptococcus pyogenes serotype M1).